Consider the following 149-residue polypeptide: Large ribosomal subunit protein bL9 (149 aa).

This sequence belongs to the bacterial ribosomal protein bL9 family.

Binds to the 23S rRNA. The polypeptide is Large ribosomal subunit protein bL9 (Xylella fastidiosa (strain M23)).